A 1141-amino-acid polypeptide reads, in one-letter code: cGMP-inhibited 3',5'-cyclic phosphodiesterase 3A (1141 aa).

The segment at 1-42 is disordered; it reads MAVPGDAARVRDKPVHSGVSQAPTAGRDCHHRADPASPRDSG. The next 6 helical transmembrane spans lie at 61–81, 130–150, 160–180, 185–205, 210–230, and 232–252; these read LSSALCAGSLSFLLALLVRLV, LQPSALLFSLLCAFFWMGLYL, AVALLAACCGGEALVQIGLGV, LLSLPAAGVVLSCLAAATWLV, LGVLMIALTSAVRTVSLISLE, and FKVAWRPYLAYLAGVLGILLA. The residue at position 312 (S312) is a Phosphoserine. A phosphoserine; by PKA and PKC mark is found at S428 and S438. Over residues 436 to 448 the composition is skewed to low complexity; it reads RVSSTWTTTTSAT. The disordered stretch occupies residues 436 to 482; the sequence is RVSSTWTTTTSATGLPTLEPAPVRRDRSTSIKLQEAPSSSPDSWNNP. The segment covering 465 to 482 has biased composition (polar residues); the sequence is SIKLQEAPSSSPDSWNNP. A phosphoserine mark is found at S492, S520, and S524. Positions 590 to 640 are disordered; it reads RPYSQGNPADEPLERSGVATRTPSRTDDTAQVTSDYETNNNSDSSDIVQNE. The span at 608–637 shows a compositional bias: polar residues; that stretch reads ATRTPSRTDDTAQVTSDYETNNNSDSSDIV. Positions 669–1141 are interaction with SLFN12; the sequence is KPILAPEPLV…EEIPTQKPDQ (473 aa). One can recognise a PDEase domain in the interval 674–1093; the sequence is PEPLVMDNLD…KMWKKVIEEE (420 aa). Catalysis depends on H752, which acts as the Proton donor. An AMP-binding site is contributed by H752. Mn(2+) contacts are provided by H756, H836, D837, and D950. D837, D950, and Q1001 together coordinate AMP. D837 contacts Mg(2+). Disordered regions lie at residues 1023 to 1062 and 1100 to 1141; these read PGKWVEDSDESGDTDDPEEEEEEAPAPNEEETCENNESPK and ENQS…KPDQ. The span at 1029-1056 shows a compositional bias: acidic residues; it reads DSDESGDTDDPEEEEEEAPAPNEEETCE. S1033 is subject to Phosphoserine. T1036 carries the post-translational modification Phosphothreonine. Residues 1100–1113 show a composition bias toward polar residues; that stretch reads ENQSLDQTPQSHSS. K1120 is covalently cross-linked (Glycyl lysine isopeptide (Lys-Gly) (interchain with G-Cter in SUMO2)). The segment covering 1125-1141 has biased composition (basic and acidic residues); it reads EKGKPRGEEIPTQKPDQ.

This sequence belongs to the cyclic nucleotide phosphodiesterase family. PDE3 subfamily. As to quaternary structure, homodimer. Interacts with SLFN12; direct low affinity interaction which is stimulated by binding of 17beta-estradiol/E2 to PDE3A and that positively regulates the ribonuclease activity of SLFN12. Requires Mn(2+) as cofactor. Mg(2+) is required as a cofactor.

Its subcellular location is the membrane. It is found in the cytoplasm. It localises to the cytosol. The enzyme catalyses a nucleoside 3',5'-cyclic phosphate + H2O = a nucleoside 5'-phosphate + H(+). The catalysed reaction is 3',5'-cyclic AMP + H2O = AMP + H(+). It carries out the reaction 3',5'-cyclic GMP + H2O = GMP + H(+). It catalyses the reaction 3',5'-cyclic UMP + H2O = UMP + H(+). Inhibited by cGMP. Inhibited by 17beta-estradiol. Inhibited by milrinone. Its function is as follows. Cyclic nucleotide phosphodiesterase with specificity for the second messengers cAMP and cGMP, which are key regulators of many important physiological processes. Also has activity toward cUMP. Independently of its catalytic activity it is part of an E2/17beta-estradiol-induced pro-apoptotic signaling pathway. E2 stabilizes the PDE3A/SLFN12 complex in the cytosol, promoting the dephosphorylation of SLFN12 and activating its pro-apoptotic ribosomal RNA/rRNA ribonuclease activity. This apoptotic pathway might be relevant in tissues with high concentration of E2 and be for instance involved in placenta remodeling. The protein is cGMP-inhibited 3',5'-cyclic phosphodiesterase 3A of Homo sapiens (Human).